The sequence spans 445 residues: Tubulin beta chain (445 aa).

GTP contacts are provided by Gln11, Glu69, Ser138, Gly142, Thr143, Gly144, Asn204, and Asn226. Glu69 contributes to the Mg(2+) binding site.

The protein belongs to the tubulin family. In terms of assembly, dimer of alpha and beta chains. A typical microtubule is a hollow water-filled tube with an outer diameter of 25 nm and an inner diameter of 15 nM. Alpha-beta heterodimers associate head-to-tail to form protofilaments running lengthwise along the microtubule wall with the beta-tubulin subunit facing the microtubule plus end conferring a structural polarity. Microtubules usually have 13 protofilaments but different protofilament numbers can be found in some organisms and specialized cells. The cofactor is Mg(2+).

The protein resides in the cytoplasm. It localises to the cytoskeleton. Tubulin is the major constituent of microtubules, a cylinder consisting of laterally associated linear protofilaments composed of alpha- and beta-tubulin heterodimers. Microtubules grow by the addition of GTP-tubulin dimers to the microtubule end, where a stabilizing cap forms. Below the cap, tubulin dimers are in GDP-bound state, owing to GTPase activity of alpha-tubulin. The sequence is that of Tubulin beta chain from Leishmania mexicana.